Here is a 464-residue protein sequence, read N- to C-terminus: ATP-dependent protease ATPase subunit HslU (464 aa).

ATP contacts are provided by residues isoleucine 22, glycine 64–glutamate 69, aspartate 275, glutamate 340, and arginine 412.

The protein belongs to the ClpX chaperone family. HslU subfamily. As to quaternary structure, a double ring-shaped homohexamer of HslV is capped on each side by a ring-shaped HslU homohexamer. The assembly of the HslU/HslV complex is dependent on binding of ATP.

Its subcellular location is the cytoplasm. Its function is as follows. ATPase subunit of a proteasome-like degradation complex; this subunit has chaperone activity. The binding of ATP and its subsequent hydrolysis by HslU are essential for unfolding of protein substrates subsequently hydrolyzed by HslV. HslU recognizes the N-terminal part of its protein substrates and unfolds these before they are guided to HslV for hydrolysis. This Cytophaga hutchinsonii (strain ATCC 33406 / DSM 1761 / CIP 103989 / NBRC 15051 / NCIMB 9469 / D465) protein is ATP-dependent protease ATPase subunit HslU.